A 509-amino-acid polypeptide reads, in one-letter code: AAA ATPase forming ring-shaped complexes (509 aa).

Residues 11–50 are a coiled coil; that stretch reads AHLQRTISNLSARNAKLAELLKASRDKLSILQDQLEDLAA. 236-241 is an ATP binding site; sequence GCGKTL.

This sequence belongs to the AAA ATPase family. As to quaternary structure, homohexamer. Assembles into a hexameric ring structure.

This Corynebacterium diphtheriae (strain ATCC 700971 / NCTC 13129 / Biotype gravis) protein is AAA ATPase forming ring-shaped complexes.